Consider the following 485-residue polypeptide: Noelin (485 aa).

Residues 1-16 (MSVPLLKIGVVLSTMA) form the signal peptide. 8 N-linked (GlcNAc...) asparagine glycosylation sites follow: asparagine 33, asparagine 103, asparagine 187, asparagine 288, asparagine 307, asparagine 394, asparagine 431, and asparagine 473. The stretch at 87–225 (RDARTKQLRQ…ERLRACMQKL (139 aa)) forms a coiled coil. An Olfactomedin-like domain is found at 226–478 (ACGKLTGISD…QILYNVTLFH (253 aa)). A disulfide bridge connects residues cysteine 227 and cysteine 409.

As to quaternary structure, homotetramer; disulfide-linked. Dimer of dimers, giving rise to a V-shaped homotretramer. Component of the AMPAR complex. In terms of processing, glycosylated.

It is found in the secreted. Its subcellular location is the synapse. The protein localises to the endoplasmic reticulum. The protein resides in the cell projection. It localises to the axon. It is found in the perikaryon. In terms of biological role, contributes to the regulation of axonal growth. May play an important role in regulating the production of neural crest cells by the neural tube. The polypeptide is Noelin (OLFM1) (Gallus gallus (Chicken)).